Consider the following 558-residue polypeptide: MAKNRKLPNPEDLLFWIRYQMFFFWKKVKRIHIVRKFRKFIYNFFIFLDDLLLSSVRKVRKFSFFLIFKYKYFIINLEDFLKFIKEIFDTSVLIVSVGTRFFHESESQEKDSELIFNFIPEIINSDGLMGTKVLLESKKILYENENKEKDLKLIVHFIPDIINNNVLIGVKVLLEKKKIFYENENIKDLEFIEGSELEGQEIKSEDIEEKVVDKDYDDSEGRVLLDESDSQAYFCREIRTREFWKQKYGNRFYYLNGHGIGGNICANDFVEFKDIKDIKKRKKYDSNKNDILVGVRDLLREHLKEKKMNLKLSGDKRIEEYDPNFNFDNPDLISSFNSTSTSTSTSTSSSNDLNLDSDSDDSDSDDSDSDSDSDSDSEIDYLDFNFDDSQLDEEGREIKKKMMIKSLRLYRDFALQSMYGADFFMMETESDDDSDSDIDEFEKVKNKYKLTFDISKEIEKDNISDFDYFLLDLFLYGPLNFKVTDICDIDQMYRVQRRERYEKMFETYKHISSIFAFSINFIFIPSDRFISKDSLQGEFIFDEFHSMGNELKVLILYW.

Positions Ser-338–Asn-354 are enriched in low complexity. The tract at residues Ser-338–Asp-380 is disordered. A compositionally biased stretch (acidic residues) spans Leu-355 to Asp-380.

It localises to the plastid. This is an uncharacterized protein from Euglena longa (Euglenophycean alga).